The primary structure comprises 596 residues: MRLLKFVCLLASVAAAKPTPGASHKVIEHLDFVPEGWQMVGAADPAAIIDFWLAIERENPEKLYDTIYDVSTPGRAQYGKHLKREELDDLLRPRVETSESIISWLTNGGVNPQHIRDEGDWVKFSTNVKTAEKLMNTRFNVFKDNLNSVSKIRTLEYSVPVAISAHVQMIQPTTLFGRQKPQNSLILNPLTKDLESMSVEEFAASQCRSLVTTACLRELYGLGDRVTQARDDNRIGVSGFLEEYAQYRDLELFLSRFEPSAKGFNFSEGLIAGGKNTQGGPGSSTEANLDMQYVVGLSHKAKVTYYSTAGRGPLVPDLSQPSQASNNNEPYLEQLRYLVKLPKNQLPSVLTTSYGETEQSLPASYTKATCDLFAQLGTMGVSVIFSSGDTGPGSSCQTNDGKNATRFNPIYPASCPFVTSIGGTVGTGPERAVSFSSGGFSDRFPCPQYQDNAVKGYLKILGNQWSGLFDPNGRAFPDIAAQGSNYAVYDKGRMTGVSGTSASAPAMAAIIAQLNDFRLAKGSPVLGFLNPWIYSKGFSGFTDIVDGGSRGCTGYDIYSGLKAKKVPYASWNATKGWDPVTGFGTPNFQALTKVLP.

The signal sequence occupies residues 1 to 16 (MRLLKFVCLLASVAAA). A propeptide spans 17–203 (KPTPGASHKV…LESMSVEEFA (187 aa)) (removed in mature form). The region spanning 210-596 (LVTTACLREL…NFQALTKVLP (387 aa)) is the Peptidase S53 domain. Asparagine 265 is a glycosylation site (N-linked (GlcNAc...) asparagine). Residues glutamate 286 and aspartate 290 each act as charge relay system in the active site. Asparagine 403 is a glycosylation site (N-linked (GlcNAc...) asparagine). Serine 501 acts as the Charge relay system in catalysis. Aspartate 543 and isoleucine 544 together coordinate Ca(2+). A glycan (N-linked (GlcNAc...) asparagine) is linked at asparagine 572. Glycine 576 and aspartate 578 together coordinate Ca(2+).

Ca(2+) serves as cofactor.

Its subcellular location is the secreted. The protein resides in the extracellular space. It carries out the reaction Release of an N-terminal tripeptide from a polypeptide.. Functionally, secreted tripeptidyl-peptidase which degrades proteins at acidic pHs and is involved in virulence. This is Probable tripeptidyl-peptidase SED2 (SED2) from Trichophyton verrucosum (strain HKI 0517).